The sequence spans 140 residues: MASVDFKTYVGQACRAAEEFVNVYYSTMDKRRRLLSRLYMGTATLVWNGNAVSGQESLSEFFEMLPSSEFQINVVDCQPVHDEATPSQTTVLVVICGTVKFEGNKQRDFNQNFILTAQASPSNTVWKIASDCFRFQDWAC.

At alanine 2 the chain carries N-acetylalanine. Residues 16–135 (AAEEFVNVYY…WKIASDCFRF (120 aa)) form the NTF2 domain.

In terms of assembly, heterodimer with NXF1. Forms a complex with RANGAP1, RANBP2/NUP358 and NXF1. Interacts (via NTF2 domain) with NXF1. Stabilizes the NTF2 domain of NXF1 by heterodimerization. The formation of NXF1-NXT1 heterodimers is required for the NXF1-mediated nuclear mRNA export. Preferentially binds Ran-GTP. Associates with NXF2, NXF3 and NXF5. Does not bind nucleoporins (NPC) directly, its association to NPC is mediated by NXF1.

It localises to the nucleus. It is found in the nucleus speckle. The protein resides in the cytoplasm. In terms of biological role, stimulator of protein export for NES-containing proteins. Also plays a role in the nuclear export of U1 snRNA, tRNA, and mRNA. The NXF1-NXT1 heterodimer is involved in the export of HSP70 mRNA in conjunction with ALYREF/THOC4 and THOC5. The protein is NTF2-related export protein 1 (NXT1) of Bos taurus (Bovine).